The chain runs to 584 residues: NADPH-dependent diflavin oxidoreductase 1 (584 aa).

The region spanning 6-150 (IYILYGSETG…VFAYWCNHLY (145 aa)) is the Flavodoxin-like domain. FMN contacts are provided by residues 12-17 (SETGTA), 59-62 (STTG), 97-106 (CGDTSYTRFN), and E132. The FAD-binding FR-type domain maps to 199–436 (RGKIEATLVH…LPGFLNLSYQ (238 aa)). FAD-binding positions include R343, 373–376 (RQYS), and 407–410 (GICS). NADP(+)-binding positions include T448, 503 to 504 (SR), and 509 to 513 (KKYVQ). An FAD-binding site is contributed by W584.

This sequence belongs to the NADPH-dependent diflavin oxidoreductase NDOR1 family. It in the N-terminal section; belongs to the flavodoxin family. In the C-terminal section; belongs to the flavoprotein pyridine nucleotide cytochrome reductase family. In terms of assembly, interacts with dre2; as part of the cytosolic iron-sulfur (Fe-S) protein assembly (CIA) machinery. FAD serves as cofactor. It depends on FMN as a cofactor.

It localises to the cytoplasm. The protein localises to the mitochondrion. The enzyme catalyses 2 oxidized [2Fe-2S]-[protein] + NADPH = 2 reduced [2Fe-2S]-[protein] + NADP(+) + H(+). NADPH-dependent reductase which is a central component of the cytosolic iron-sulfur (Fe-S) protein assembly (CIA) machinery. Transfers electrons from NADPH via its FAD and FMN prosthetic groups to the [2Fe-2S] cluster of dre2, another key component of the CIA machinery. In turn, this reduced cluster provides electrons for assembly of cytosolic iron-sulfur cluster proteins. Positively controls H(2)O(2)-induced cell death. This is NADPH-dependent diflavin oxidoreductase 1 from Schizosaccharomyces pombe (strain 972 / ATCC 24843) (Fission yeast).